The chain runs to 329 residues: Nitrogenase iron-iron protein beta chain (329 aa).

Residues C20, C45, C104, and S143 each coordinate [8Fe-7S] cluster. The interval 213-288 (SADGSLVSHG…EEGDGKPIPQ (76 aa)) is disordered. Residues 257–271 (RSRRSSARPRSHPQY) are compositionally biased toward basic residues.

Belongs to the NifD/NifK/NifE/NifN family. Hexamer of two alpha, two beta, and two delta chains. It depends on [8Fe-7S] cluster as a cofactor.

It carries out the reaction N2 + 8 reduced [2Fe-2S]-[ferredoxin] + 16 ATP + 16 H2O = H2 + 8 oxidized [2Fe-2S]-[ferredoxin] + 2 NH4(+) + 16 ADP + 16 phosphate + 6 H(+). This iron-iron protein is part of the nitrogenase complex that catalyzes the key enzymatic reactions in nitrogen fixation. Other nitrogenase complexes utilize a molybdenum-iron protein or a vanadium-iron protein. The chain is Nitrogenase iron-iron protein beta chain (anfK) from Ruminiclostridium hungatei (Clostridium hungatei).